A 250-amino-acid polypeptide reads, in one-letter code: 5-oxoprolinase subunit A (250 aa).

This sequence belongs to the LamB/PxpA family. Forms a complex composed of PxpA, PxpB and PxpC.

It catalyses the reaction 5-oxo-L-proline + ATP + 2 H2O = L-glutamate + ADP + phosphate + H(+). Functionally, catalyzes the cleavage of 5-oxoproline to form L-glutamate coupled to the hydrolysis of ATP to ADP and inorganic phosphate. The chain is 5-oxoprolinase subunit A from Pseudomonas fluorescens (strain Pf0-1).